The chain runs to 602 residues: DNA mismatch repair protein MutL (602 aa).

The disordered stretch occupies residues 337–367 (KRPFPGSSTNYSGIQQDTKKQESDNPEKARG). The segment covering 342–352 (GSSTNYSGIQQ) has biased composition (polar residues). Residues 353 to 367 (DTKKQESDNPEKARG) are compositionally biased toward basic and acidic residues.

The protein belongs to the DNA mismatch repair MutL/HexB family.

Its function is as follows. This protein is involved in the repair of mismatches in DNA. It is required for dam-dependent methyl-directed DNA mismatch repair. May act as a 'molecular matchmaker', a protein that promotes the formation of a stable complex between two or more DNA-binding proteins in an ATP-dependent manner without itself being part of a final effector complex. In Kosmotoga olearia (strain ATCC BAA-1733 / DSM 21960 / TBF 19.5.1), this protein is DNA mismatch repair protein MutL.